Consider the following 352-residue polypeptide: Uroporphyrinogen decarboxylase (352 aa).

Substrate is bound by residues 27-31 (RQAGR), aspartate 77, tyrosine 154, threonine 209, and histidine 325.

The protein belongs to the uroporphyrinogen decarboxylase family. Homodimer.

The protein localises to the cytoplasm. It carries out the reaction uroporphyrinogen III + 4 H(+) = coproporphyrinogen III + 4 CO2. It participates in porphyrin-containing compound metabolism; protoporphyrin-IX biosynthesis; coproporphyrinogen-III from 5-aminolevulinate: step 4/4. Functionally, catalyzes the decarboxylation of four acetate groups of uroporphyrinogen-III to yield coproporphyrinogen-III. This Legionella pneumophila subsp. pneumophila (strain Philadelphia 1 / ATCC 33152 / DSM 7513) protein is Uroporphyrinogen decarboxylase.